We begin with the raw amino-acid sequence, 116 residues long: Protein Wnt-5(I) (116 aa).

Ser1 carries O-palmitoleoyl serine; by PORCN lipidation. N-linked (GlcNAc...) asparagine glycosylation is present at Asn69. Cys82 and Cys97 are disulfide-bonded.

The protein belongs to the Wnt family. Post-translationally, palmitoleoylation is required for efficient binding to frizzled receptors. Depalmitoleoylation leads to Wnt signaling pathway inhibition.

It localises to the secreted. It is found in the extracellular space. The protein localises to the extracellular matrix. Functionally, ligand for members of the frizzled family of seven transmembrane receptors. Probable developmental protein. May be a signaling molecule which affects the development of discrete regions of tissues. Is likely to signal over only few cell diameters. This Eptatretus stoutii (Pacific hagfish) protein is Protein Wnt-5(I) (WNT-5(I)).